A 267-amino-acid chain; its full sequence is Methyl-coenzyme M reductase II subunit gamma (267 aa).

Arginine 123 is a coenzyme M binding site.

This sequence belongs to the methyl-coenzyme M reductase gamma subunit family. As to quaternary structure, MCR is a hexamer of two alpha, two beta, and two gamma chains, forming a dimer of heterotrimers. Coenzyme F430 serves as cofactor.

The catalysed reaction is coenzyme B + methyl-coenzyme M = methane + coenzyme M-coenzyme B heterodisulfide. It participates in one-carbon metabolism; methyl-coenzyme M reduction; methane from methyl-coenzyme M: step 1/1. Functionally, component of the methyl-coenzyme M reductase (MCR) I that catalyzes the reductive cleavage of methyl-coenzyme M (CoM-S-CH3 or 2-(methylthio)ethanesulfonate) using coenzyme B (CoB or 7-mercaptoheptanoylthreonine phosphate) as reductant which results in the production of methane and the mixed heterodisulfide of CoB and CoM (CoM-S-S-CoB). This is the final step in methanogenesis. The polypeptide is Methyl-coenzyme M reductase II subunit gamma (mrtG) (Methanothermus fervidus (strain ATCC 43054 / DSM 2088 / JCM 10308 / V24 S)).